The chain runs to 239 residues: Ribonuclease PH (239 aa).

Phosphate contacts are provided by residues Arg87 and 125 to 127 (GTR).

It belongs to the RNase PH family. Homohexameric ring arranged as a trimer of dimers.

It carries out the reaction tRNA(n+1) + phosphate = tRNA(n) + a ribonucleoside 5'-diphosphate. Functionally, phosphorolytic 3'-5' exoribonuclease that plays an important role in tRNA 3'-end maturation. Removes nucleotide residues following the 3'-CCA terminus of tRNAs; can also add nucleotides to the ends of RNA molecules by using nucleoside diphosphates as substrates, but this may not be physiologically important. Probably plays a role in initiation of 16S rRNA degradation (leading to ribosome degradation) during starvation. The sequence is that of Ribonuclease PH from Azotobacter vinelandii (strain DJ / ATCC BAA-1303).